The primary structure comprises 789 residues: Potassium transporter 4 (789 aa).

Residues methionine 1–serine 32 lie on the Cytoplasmic side of the membrane. Serine 9 is modified (phosphoserine). The helical transmembrane segment at phenylalanine 33–isoleucine 53 threads the bilayer. Topologically, residues glycine 54–alanine 68 are extracellular. Residues phenylalanine 69–leucine 89 form a helical membrane-spanning segment. The Cytoplasmic segment spans residues serine 90–threonine 154. A helical transmembrane segment spans residues alanine 155–proline 175. Over alanine 176–aspartate 195 the chain is Extracellular. The chain crosses the membrane as a helical span at residues glycine 196 to glycine 216. Residues threonine 217–arginine 219 are Cytoplasmic-facing. Residues valine 220–leucine 240 form a helical membrane-spanning segment. The Extracellular portion of the chain corresponds to tyrosine 241 to glycine 270. The chain crosses the membrane as a helical span at residues tryptophan 271–leucine 291. At glycine 292–arginine 300 the chain is on the cytoplasmic side. Residues valine 301–phenylalanine 321 form a helical membrane-spanning segment. The Extracellular portion of the chain corresponds to leucine 322 to proline 340. Residues valine 341–isoleucine 361 form a helical membrane-spanning segment. Residues threonine 362–glutamine 392 are Cytoplasmic-facing. The helical transmembrane segment at isoleucine 393–phenylalanine 413 threads the bilayer. Over arginine 414–glycine 424 the chain is Extracellular. The chain crosses the membrane as a helical span at residues isoleucine 425–valine 445. Residues tryptophan 446 to cysteine 450 are Cytoplasmic-facing. The chain crosses the membrane as a helical span at residues phenylalanine 451–alanine 471. Residues leucine 472–glycine 478 are Extracellular-facing. A helical transmembrane segment spans residues glycine 479–glycine 499. Topologically, residues threonine 500–valine 789 are cytoplasmic.

This sequence belongs to the HAK/KUP transporter (TC 2.A.72.3) family. In terms of tissue distribution, detected at very low levels in roots, stems, leaves and flowers of mature plants and strongly expressed in the roots of potassium-starved plants.

The protein localises to the cell membrane. Its function is as follows. High-affinity potassium transporter. The chain is Potassium transporter 4 (POT4) from Arabidopsis thaliana (Mouse-ear cress).